The chain runs to 217 residues: Octanoyltransferase (217 aa).

One can recognise a BPL/LPL catalytic domain in the interval Asp35–Arg214. Residues Arg73–His80, Ala145–Gly147, and Gly158–Ser160 each bind substrate. Residue Cys176 is the Acyl-thioester intermediate of the active site.

Belongs to the LipB family.

The protein resides in the cytoplasm. The enzyme catalyses octanoyl-[ACP] + L-lysyl-[protein] = N(6)-octanoyl-L-lysyl-[protein] + holo-[ACP] + H(+). It participates in protein modification; protein lipoylation via endogenous pathway; protein N(6)-(lipoyl)lysine from octanoyl-[acyl-carrier-protein]: step 1/2. In terms of biological role, catalyzes the transfer of endogenously produced octanoic acid from octanoyl-acyl-carrier-protein onto the lipoyl domains of lipoate-dependent enzymes. Lipoyl-ACP can also act as a substrate although octanoyl-ACP is likely to be the physiological substrate. This chain is Octanoyltransferase, found in Sphingopyxis alaskensis (strain DSM 13593 / LMG 18877 / RB2256) (Sphingomonas alaskensis).